A 220-amino-acid chain; its full sequence is Pyrrolidone-carboxylate peptidase 1 (220 aa).

Catalysis depends on residues Glu-80, Cys-143, and His-172.

It belongs to the peptidase C15 family. As to quaternary structure, homotetramer.

The protein localises to the cytoplasm. The catalysed reaction is Release of an N-terminal pyroglutamyl group from a polypeptide, the second amino acid generally not being Pro.. Functionally, removes 5-oxoproline from various penultimate amino acid residues except L-proline. The sequence is that of Pyrrolidone-carboxylate peptidase 1 from Photorhabdus laumondii subsp. laumondii (strain DSM 15139 / CIP 105565 / TT01) (Photorhabdus luminescens subsp. laumondii).